The primary structure comprises 591 residues: Aspartate--tRNA(Asp/Asn) ligase (591 aa).

E174 provides a ligand contact to L-aspartate. Residues 198 to 201 (QLFK) are aspartate. R220 serves as a coordination point for L-aspartate. Residues 220-222 (RDE) and Q229 each bind ATP. H450 serves as a coordination point for L-aspartate. Residue E483 participates in ATP binding. R490 provides a ligand contact to L-aspartate. Residue 535 to 538 (GLDR) coordinates ATP.

This sequence belongs to the class-II aminoacyl-tRNA synthetase family. Type 1 subfamily. As to quaternary structure, homodimer.

Its subcellular location is the cytoplasm. The enzyme catalyses tRNA(Asx) + L-aspartate + ATP = L-aspartyl-tRNA(Asx) + AMP + diphosphate. Aspartyl-tRNA synthetase with relaxed tRNA specificity since it is able to aspartylate not only its cognate tRNA(Asp) but also tRNA(Asn). Reaction proceeds in two steps: L-aspartate is first activated by ATP to form Asp-AMP and then transferred to the acceptor end of tRNA(Asp/Asn). This Pseudomonas putida (strain GB-1) protein is Aspartate--tRNA(Asp/Asn) ligase.